The primary structure comprises 2358 residues: Cell wall alpha-1,3-glucan synthase mok13 (2358 aa).

Over residues 1645–1659 (EGLENEENELKDKAP) the composition is skewed to basic and acidic residues. The tract at residues 1645 to 1669 (EGLENEENELKDKAPPNEPNVGSLF) is disordered.

This sequence belongs to the glycosyltransferase group 1 family.

It catalyses the reaction [(1-&gt;3)-alpha-D-glucosyl](n) + UDP-alpha-D-glucose = [(1-&gt;3)-alpha-D-glucosyl](n+1) + UDP + H(+). This is Cell wall alpha-1,3-glucan synthase mok13 (mok13) from Schizosaccharomyces pombe (strain 972 / ATCC 24843) (Fission yeast).